Reading from the N-terminus, the 286-residue chain is 5-amino-6-(5-phospho-D-ribitylamino)uracil phosphatase YwtE (286 aa).

The active-site Nucleophile is aspartate 7. Aspartate 7 serves as a coordination point for Mg(2+). Leucine 8 provides a ligand contact to phosphate. Aspartate 9 contacts Mg(2+). Residues 41 to 42 and lysine 210 each bind phosphate; that span reads TG. Positions 233 and 234 each coordinate Mg(2+). A phosphate-binding site is contributed by asparagine 236.

It belongs to the HAD-like hydrolase superfamily. Cof family. Mg(2+) serves as cofactor.

The enzyme catalyses 5-amino-6-(5-phospho-D-ribitylamino)uracil + H2O = 5-amino-6-(D-ribitylamino)uracil + phosphate. It participates in cofactor biosynthesis; riboflavin biosynthesis; 5-amino-6-(D-ribitylamino)uracil from GTP: step 4/4. Its function is as follows. Catalyzes the dephosphorylation of the riboflavin precursor 5-amino-6-(5-phospho-D-ribitylamino)uracil and of flavin mononucleotide (FMN) in vitro. Also catalyzes the dephosphorylation of phosphorylated 5-6 carbon sugars and monophosphate nucleotides (NMP) in vitro. In Bacillus subtilis (strain 168), this protein is 5-amino-6-(5-phospho-D-ribitylamino)uracil phosphatase YwtE (ywtE).